We begin with the raw amino-acid sequence, 103 residues long: Probable protease inhibitor Egf0.4a (103 aa).

Positions 1 to 22 (MMSEKFALVLLVACIAFIGIET) are cleaved as a signal peptide. The TIL domain maps to 35-87 (CGENEAYDSMRRGCEKRCDDHNPTFCFKFTTVCWCEKGYVRDKSDTCIKVEDC).

Belongs to the polydnaviridae EGF-like motif protein family.

This Microplitis demolitor (Parasitoid wasp) protein is Probable protease inhibitor Egf0.4a (O4).